The chain runs to 288 residues: Mortality factor 4-like protein 2 (288 aa).

Residues 1–15 are compositionally biased toward polar residues; the sequence is MSSRKQGSQPRGQQS. The tract at residues 1 to 113 is disordered; the sequence is MSSRKQGSQP…RADPTVESEE (113 aa). Phosphoserine is present on Ser71. Positions 117–288 constitute an MRG domain; it reads NRMEVKVKIP…ASAEYHRKAL (172 aa).

Component of the NuA4 histone acetyltransferase complex which contains the catalytic subunit KAT5/TIP60 and the subunits EP400, TRRAP/PAF400, BRD8/SMAP, EPC1, DMAP1/DNMAP1, RUVBL1/TIP49, RUVBL2, ING3, actin, ACTL6A/BAF53A, MORF4L1/MRG15, MORF4L2/MRGX, MRGBP, YEATS4/GAS41 and VPS72/YL1. The NuA4 complex interacts with MYC and the adenovirus E1A protein. MORF4L1 may also participate in the formation of NuA4 related complexes which lack the KAT5/TIP60 catalytic subunit, but which include the SWI/SNF related protein SRCAP. Component of the MSIN3A histone deacetylase complex, which includes SIN3A, HDAC2, ARID4B, MORF4L1, RBBP4/RbAp48, and RBBP7/RbAp46. Interacts with MRFAP1 and RB1. May also interact with one or more as yet undefined members of the TLE (transducin-like enhancer of split) family of transcriptional repressors.

It is found in the nucleus. Functionally, component of the NuA4 histone acetyltransferase complex which is involved in transcriptional activation of select genes principally by acetylation of nucleosomal histone H4 and H2A. This modification may both alter nucleosome - DNA interactions and promote interaction of the modified histones with other proteins which positively regulate transcription. This complex may be required for the activation of transcriptional programs associated with oncogene and proto-oncogene mediated growth induction, tumor suppressor mediated growth arrest and replicative senescence, apoptosis, and DNA repair. The NuA4 complex ATPase and helicase activities seem to be, at least in part, contributed by the association of RUVBL1 and RUVBL2 with EP400. NuA4 may also play a direct role in DNA repair when directly recruited to sites of DNA damage. Also a component of the MSIN3A complex which acts to repress transcription by deacetylation of nucleosomal histones. The sequence is that of Mortality factor 4-like protein 2 (MORF4L2) from Macaca fascicularis (Crab-eating macaque).